Consider the following 530-residue polypeptide: Capsid protein VP1 (530 aa).

Residues 1-20 are disordered; that stretch reads MMMASKDATSSVDGASGAGQ. The tract at residues 1 to 225 is shell domain; it reads MMMASKDATS…FLFLVPPTVE (225 aa). Positions 226–278 are P1 sub-domain 1; that stretch reads QKTRPFTLPNLPLSSLSNSRAPLPISSMGISPDNVQSVQFQNGRCTLDGRLVG. Residues 226–530 form a protruding domain region; sequence QKTRPFTLPN…SARGRLGLRR (305 aa). Positions 279–405 are P2 sub-domain; the sequence is TTPVSLSHVA…GSSITEATHL (127 aa). The interval 406–530 is P1 sub-domain 2; that stretch reads APSVYPPGFG…SARGRLGLRR (125 aa). Residues 523 to 530 form a plays a role in binding to host histo-blood group structures antigens and in the formation of P-particles region; sequence RGRLGLRR.

This sequence belongs to the caliciviridae capsid protein family. In terms of assembly, homodimer. Homomultimer. Interacts with the minor capsid protein VP2. Interacts (via C-terminus) with host type I histo-blood group structures antigens at the surface of target cells. May be cleaved by host protease to generate soluble capsid protein. Assembled capsid cannot be cleaved.

The protein localises to the virion. Its subcellular location is the host cytoplasm. Functionally, capsid protein self assembles to form an icosahedral capsid with a T=3 symmetry, about 38 nm in diameter, and consisting of 180 capsid proteins. A smaller form of capsid with a diameter of 23 nm might be capsid proteins assembled as icosahedron with T=1 symmetry. The capsid encapsulates the genomic RNA and is decorated with VP2 proteins. Attaches virion to target cells by binding histo-blood group antigens (HBGAs) present on gastroduodenal epithelial cells. Its function is as follows. The soluble capsid protein may play a role in viral immunoevasion. This chain is Capsid protein VP1, found in Norovirus (strain Human/NoV/United States/Norwalk/1968/GI) (Hu/NV/NV/1968/US).